A 683-amino-acid chain; its full sequence is DNA ligase (683 aa).

NAD(+) is bound by residues 44 to 48 (DAEYD), 93 to 94 (SL), and glutamate 127. Lysine 129 (N6-AMP-lysine intermediate) is an active-site residue. NAD(+) is bound by residues arginine 150, glutamate 187, lysine 302, and lysine 326. Zn(2+) contacts are provided by cysteine 420, cysteine 423, cysteine 438, and cysteine 444. In terms of domain architecture, BRCT spans 601-683 (RVGGRLAGLT…SKLLATGGNQ (83 aa)).

The protein belongs to the NAD-dependent DNA ligase family. LigA subfamily. Requires Mg(2+) as cofactor. Mn(2+) is required as a cofactor.

It carries out the reaction NAD(+) + (deoxyribonucleotide)n-3'-hydroxyl + 5'-phospho-(deoxyribonucleotide)m = (deoxyribonucleotide)n+m + AMP + beta-nicotinamide D-nucleotide.. Its function is as follows. DNA ligase that catalyzes the formation of phosphodiester linkages between 5'-phosphoryl and 3'-hydroxyl groups in double-stranded DNA using NAD as a coenzyme and as the energy source for the reaction. It is essential for DNA replication and repair of damaged DNA. The polypeptide is DNA ligase (Trichlorobacter lovleyi (strain ATCC BAA-1151 / DSM 17278 / SZ) (Geobacter lovleyi)).